Here is a 498-residue protein sequence, read N- to C-terminus: Cystathionine beta-synthase (498 aa).

The tract at residues 1 to 25 (MSAPEGPSKCTWTPNTTENTPHTTR) is disordered. Low complexity predominate over residues 11-22 (TWTPNTTENTPH). Residue K73 is modified to N6-(pyridoxal phosphate)lysine. Pyridoxal 5'-phosphate is bound by residues N103, 210–214 (GTGGT), and S302. 2 consecutive CBS domains span residues 374–430 (TLPK…KKAV) and 435–497 (VSKV…SQQK).

Belongs to the cysteine synthase/cystathionine beta-synthase family. It depends on pyridoxal 5'-phosphate as a cofactor.

It carries out the reaction L-homocysteine + L-serine = L,L-cystathionine + H2O. Its pathway is amino-acid biosynthesis; L-cysteine biosynthesis; L-cysteine from L-homocysteine and L-serine: step 1/2. This chain is Cystathionine beta-synthase (cysB), found in Dictyostelium discoideum (Social amoeba).